Reading from the N-terminus, the 129-residue chain is Transcription antitermination protein NusB (129 aa).

It belongs to the NusB family.

Its function is as follows. Involved in transcription antitermination. Required for transcription of ribosomal RNA (rRNA) genes. Binds specifically to the boxA antiterminator sequence of the ribosomal RNA (rrn) operons. This Staphylococcus aureus (strain N315) protein is Transcription antitermination protein NusB.